A 515-amino-acid polypeptide reads, in one-letter code: Bifunctional purine biosynthesis protein PurH (515 aa).

One can recognise an MGS-like domain in the interval M1 to V145.

Belongs to the PurH family.

It carries out the reaction (6R)-10-formyltetrahydrofolate + 5-amino-1-(5-phospho-beta-D-ribosyl)imidazole-4-carboxamide = 5-formamido-1-(5-phospho-D-ribosyl)imidazole-4-carboxamide + (6S)-5,6,7,8-tetrahydrofolate. It catalyses the reaction IMP + H2O = 5-formamido-1-(5-phospho-D-ribosyl)imidazole-4-carboxamide. The protein operates within purine metabolism; IMP biosynthesis via de novo pathway; 5-formamido-1-(5-phospho-D-ribosyl)imidazole-4-carboxamide from 5-amino-1-(5-phospho-D-ribosyl)imidazole-4-carboxamide (10-formyl THF route): step 1/1. It participates in purine metabolism; IMP biosynthesis via de novo pathway; IMP from 5-formamido-1-(5-phospho-D-ribosyl)imidazole-4-carboxamide: step 1/1. This chain is Bifunctional purine biosynthesis protein PurH, found in Streptococcus pyogenes serotype M12 (strain MGAS2096).